Reading from the N-terminus, the 267-residue chain is Glutamate racemase (267 aa).

Residues 9–10 (DS) and 41–42 (YS) each bind substrate. C73 (proton donor/acceptor) is an active-site residue. 74–75 (NT) is a binding site for substrate. Residue C184 is the Proton donor/acceptor of the active site. 185–186 (TH) provides a ligand contact to substrate.

The protein belongs to the aspartate/glutamate racemases family.

The catalysed reaction is L-glutamate = D-glutamate. It participates in cell wall biogenesis; peptidoglycan biosynthesis. Functionally, provides the (R)-glutamate required for cell wall biosynthesis. The sequence is that of Glutamate racemase from Glaesserella parasuis serovar 5 (strain SH0165) (Haemophilus parasuis).